We begin with the raw amino-acid sequence, 470 residues long: Aspartate-semialdehyde dehydrogenase 1 (470 aa).

NAD(+) contacts are provided by T145 and K171. D243 is a catalytic residue. Position 245 (G245) interacts with NAD(+). The active site involves C277. Position 371 (E371) interacts with NAD(+).

Belongs to the aldehyde dehydrogenase family.

It catalyses the reaction L-aspartate 4-semialdehyde + NAD(+) + H2O = L-aspartate + NADH + 2 H(+). Functionally, dehydrogenase involved in the degradation of canavanine, the delta-oxa-analog of arginine, allowing growth on canavanine as sole nitrogen and carbon source. Probably catalyzes the NAD(+)-dependent oxidation of L-aspartate-semialdehyde to L-aspartate. This is Aspartate-semialdehyde dehydrogenase 1 from Pseudomonas canavaninivorans.